A 62-amino-acid chain; its full sequence is Inner membrane protein p12 (62 aa).

The helical transmembrane segment at 16 to 36 threads the bilayer; that stretch reads LLIVAIIVVIMAIMLYYFWWM.

Belongs to the asfivirus inner membrane protein p12 family. Homomultimer; disulfide-linked. In terms of processing, not glycosylated.

The protein localises to the virion membrane. The chain is Inner membrane protein p12 from African swine fever virus (isolate Tick/Malawi/Lil 20-1/1983) (ASFV).